A 1052-amino-acid polypeptide reads, in one-letter code: MREAAERRQQLQLEHDQALAVLSAKQQEIDLLQKSKVRELEEKCRTQSEQFNLLSRDLEKFRQHAGKIDLLGGSAVAPLDISTAPSKPFPQFMNGLATSLGKGQESAIGGSSAIGEYIRPLPQPGDRPEPLSAKPTFLSRSGSARCRSESDMENERNSNTSKQRYSGKVHLCVARYSYNPFDGPNENPEAELPLTAGKYLYVYGDMDEDGFYEGELLDGQRGLVPSNFVDFVQDNESRLASTLGNEQDQNFINHSGIGLEGEHILDLHSPTHIDAGITDNSAGTLDVNIDDIGEDIVPYPRKITLIKQLAKSVIVGWEPPAVPPGWGTVSSYNVLVDKETRMNLTLGSRTKALIEKLNMAACTYRISVQCVTSRGSSDELQCTLLVGKDVVVAPSHLRVDNITQISAQLSWLPTNSNYSHVIFLNEEEFDIVKAARYKYQFFNLRPNMAYKVKVLAKPHQMPWQLPLEQREKKEAFVEFSTLPAGPPAPPQDVTVQAGVTPATIRVSWRPPVLTPTGLSNGANVTGYGVYAKGQRVAEVIFPTADSTAVELVRLRSLEAKGVTVRTLSAQGESVDSAVAAVPPELLVPPTPHPRPAPQSKPLASSGVPETKDEHLGPHARMDEAWEQSRAPGPVHGHMLEPPVGPGRRSPSPSRILPQPQGTPVSTTVAKAMAREAAQRVAESSRLEKRSVFLERSSAGQYAASDEEDAYDSPDFKRRGASVDDFLKGSELGKQPHCCHGDEYHTESSRGSDLSDIMEEDEEELYSEMQLEDGGRRRPSGTSHNALKILGNPASAGRVDHMGRRFPRGSAGPQRSRPVTVPSIDDYGRDRLSPDFYEESETDPGAEELPARIFVALFDYDPLTMSPNPDAAEEELPFKEGQIIKVYGDKDADGFYRGETCARLGLIPCNMVSEIQADDEEMMDQLLRQGFLPLNTPVEKIERSRRSGRRHSVSTRRMVALYDYDPRESSPNVDVEAELTFCTGDIITVFGEIDEDGFYYGELNGQKGLVPSNFLEEVPDDVEVYLSDAPSHYSQDTPMRSKAKRKKSVHFTP.

The tract at residues 115–164 (GEYIRPLPQPGDRPEPLSAKPTFLSRSGSARCRSESDMENERNSNTSKQR) is disordered. Residues 146-156 (CRSESDMENER) are compositionally biased toward basic and acidic residues. Residues 167–234 (GKVHLCVARY…PSNFVDFVQD (68 aa)) enclose the SH3 1 domain. 3 consecutive Fibronectin type-III domains span residues 297–390 (VPYP…GKDV), 393–475 (APSH…KKEA), and 489–590 (PPQD…VPPT). Disordered regions lie at residues 584–615 (ELLVPPTPHPRPAPQSKPLASSGVPETKDEHL), 629–666 (RAPGPVHGHMLEPPVGPGRRSPSPSRILPQPQGTPVST), 697–716 (SAGQYAASDEEDAYDSPDFK), 767–787 (EMQLEDGGRRRPSGTSHNALK), and 805–829 (FPRGSAGPQRSRPVTVPSIDDYGRD). Residues 585–598 (LLVPPTPHPRPAPQ) are compositionally biased toward pro residues. Residues 645–654 (PGRRSPSPSR) show a composition bias toward low complexity. Phosphoserine occurs at positions 704 and 712. Serine 832 and serine 839 each carry phosphoserine. Residue threonine 841 is modified to Phosphothreonine. SH3 domains lie at 848 to 916 (LPAR…EIQA) and 952 to 1019 (VSTR…EVPD). Residues 1029 to 1052 (PSHYSQDTPMRSKAKRKKSVHFTP) are disordered. Basic residues predominate over residues 1040-1052 (SKAKRKKSVHFTP).

It belongs to the RIMBP family. As to quaternary structure, interacts with RIMS1, RIMS2, CACNA1D and CACNA1B, and potentially with other Ca(2+) channel alpha-1 isoforms.

It localises to the cell membrane. Its subcellular location is the synapse. Its function is as follows. Plays a role in the synaptic transmission as bifunctional linker that interacts simultaneously with RIMS1, RIMS2, CACNA1D and CACNA1B. The protein is RIMS-binding protein 2 (RIMBP2) of Homo sapiens (Human).